Reading from the N-terminus, the 466-residue chain is Asparagine--tRNA ligase (466 aa).

Belongs to the class-II aminoacyl-tRNA synthetase family. In terms of assembly, homodimer.

It localises to the cytoplasm. It catalyses the reaction tRNA(Asn) + L-asparagine + ATP = L-asparaginyl-tRNA(Asn) + AMP + diphosphate + H(+). The chain is Asparagine--tRNA ligase from Idiomarina loihiensis (strain ATCC BAA-735 / DSM 15497 / L2-TR).